The primary structure comprises 237 residues: High-affinity branched-chain amino acid transport ATP-binding protein LivF (237 aa).

The 232-residue stretch at 6–237 (LTFEKVSAHY…EAVRSAYLGG (232 aa)) folds into the ABC transporter domain. 38-45 (GANGAGKT) lines the ATP pocket.

This sequence belongs to the ABC transporter superfamily.

In terms of biological role, component of the high-affinity branched-chain amino acid transport system. The chain is High-affinity branched-chain amino acid transport ATP-binding protein LivF (livF) from Salmonella typhi.